We begin with the raw amino-acid sequence, 710 residues long: TRP-like ion channel pkd2 (710 aa).

A signal peptide spans 1-23; sequence MRLWRSPLLLLVVVVELFSWADA. The next 9 membrane-spanning stretches (helical) occupy residues 173 to 193, 197 to 217, 322 to 342, 376 to 396, 404 to 424, 466 to 486, 492 to 512, 525 to 545, and 555 to 575; these read WVMC…SPVL, ALWE…IQAL, FFAT…LVAM, FFYR…MWEI, LAFL…YAFV, FFYF…FIGF, KVQG…MVIL, IGVA…CQAF, and IGII…LGIF. A phosphoserine mark is found at S599 and S632. Residues 689-710 form a disordered region; the sequence is RISENNNNAERRRKPLPNNAFR.

The protein belongs to the transient receptor potential (TRP) ion channel family. In terms of assembly, interacts with rho1.

The protein resides in the cell membrane. The protein localises to the golgi apparatus membrane. In terms of biological role, acts as a key signaling component in the regulation of cell shape and cell wall synthesis through interaction with GTPase Rho1. In Schizosaccharomyces pombe (strain 972 / ATCC 24843) (Fission yeast), this protein is TRP-like ion channel pkd2 (pkd2).